We begin with the raw amino-acid sequence, 42 residues long: uncharacterized protein (42 aa).

This is an uncharacterized protein from Musa (BBTV).